The following is a 196-amino-acid chain: Phosphoheptose isomerase (196 aa).

The 159-residue stretch at 34–192 folds into the SIS domain; that stretch reads MVQCLLGGNK…CEIIDTTLFP (159 aa). Residue 49 to 51 participates in substrate binding; the sequence is NGG. Histidine 58 and glutamine 62 together coordinate Zn(2+). Substrate-binding positions include glutamine 62, 91-92, 117-119, serine 122, and glutamine 172; these read ND and STS. Zn(2+) is bound by residues glutamine 172 and histidine 180.

The protein belongs to the SIS family. GmhA subfamily. As to quaternary structure, homotetramer. Requires Zn(2+) as cofactor.

The protein resides in the cytoplasm. It carries out the reaction 2 D-sedoheptulose 7-phosphate = D-glycero-alpha-D-manno-heptose 7-phosphate + D-glycero-beta-D-manno-heptose 7-phosphate. The protein operates within carbohydrate biosynthesis; D-glycero-D-manno-heptose 7-phosphate biosynthesis; D-glycero-alpha-D-manno-heptose 7-phosphate and D-glycero-beta-D-manno-heptose 7-phosphate from sedoheptulose 7-phosphate: step 1/1. In terms of biological role, catalyzes the isomerization of sedoheptulose 7-phosphate in D-glycero-D-manno-heptose 7-phosphate. This chain is Phosphoheptose isomerase, found in Colwellia psychrerythraea (strain 34H / ATCC BAA-681) (Vibrio psychroerythus).